The chain runs to 340 residues: Alcohol dehydrogenase (340 aa).

Zn(2+) contacts are provided by Cys37, His58, Cys89, Cys92, Cys95, Cys103, and Cys145.

The protein belongs to the zinc-containing alcohol dehydrogenase family. Requires Zn(2+) as cofactor.

It catalyses the reaction a primary alcohol + NAD(+) = an aldehyde + NADH + H(+). It carries out the reaction a secondary alcohol + NAD(+) = a ketone + NADH + H(+). This chain is Alcohol dehydrogenase (adh), found in Staphylococcus epidermidis (strain ATCC 35984 / DSM 28319 / BCRC 17069 / CCUG 31568 / BM 3577 / RP62A).